The sequence spans 267 residues: Undecaprenyl-diphosphatase 1 (267 aa).

8 helical membrane-spanning segments follow: residues 6–26 (VLVVALIQGLGEVLPFGAAGL), 41–60 (AALSVAAHAGILLALMIYFW), 83–103 (HLLLHVLAGTIPAAIVGWLVL), 109–129 (LVGQSGAAIILILGGVLLWGC), 142–162 (MSWVGAAGLGALQILSLVPGV), 185–205 (FSMLLAMPLILGHGVKTFWGL), 217–237 (LLMAMATAGLAALIGLAGMMA), and 244–264 (FVPFAILRIGFGIAVLGLVYF).

This sequence belongs to the UppP family.

Its subcellular location is the cell inner membrane. It catalyses the reaction di-trans,octa-cis-undecaprenyl diphosphate + H2O = di-trans,octa-cis-undecaprenyl phosphate + phosphate + H(+). Functionally, catalyzes the dephosphorylation of undecaprenyl diphosphate (UPP). Confers resistance to bacitracin. The protein is Undecaprenyl-diphosphatase 1 of Paramagnetospirillum magneticum (strain ATCC 700264 / AMB-1) (Magnetospirillum magneticum).